The chain runs to 158 residues: NADH-quinone oxidoreductase subunit B 2 (158 aa).

The [4Fe-4S] cluster site is built by C37, C38, C102, and C132.

It belongs to the complex I 20 kDa subunit family. NDH-1 is composed of 14 different subunits. Subunits NuoB, C, D, E, F, and G constitute the peripheral sector of the complex. [4Fe-4S] cluster is required as a cofactor.

Its subcellular location is the cell inner membrane. It catalyses the reaction a quinone + NADH + 5 H(+)(in) = a quinol + NAD(+) + 4 H(+)(out). Its function is as follows. NDH-1 shuttles electrons from NADH, via FMN and iron-sulfur (Fe-S) centers, to quinones in the respiratory chain. Couples the redox reaction to proton translocation (for every two electrons transferred, four hydrogen ions are translocated across the cytoplasmic membrane), and thus conserves the redox energy in a proton gradient. This Acidithiobacillus ferrooxidans (strain ATCC 53993 / BNL-5-31) (Leptospirillum ferrooxidans (ATCC 53993)) protein is NADH-quinone oxidoreductase subunit B 2.